The primary structure comprises 134 residues: Profilin-3 (134 aa).

A disulfide bridge links Cys-13 with Cys-118. The Involved in PIP2 interaction signature appears at 84–100; it reads AVIRGKKGSGGITIKKT. Thr-114 carries the phosphothreonine modification.

The protein belongs to the profilin family. In terms of assembly, occurs in many kinds of cells as a complex with monomeric actin in a 1:1 ratio. In terms of processing, phosphorylated by MAP kinases.

It is found in the cytoplasm. It localises to the cytoskeleton. Its function is as follows. Binds to actin and affects the structure of the cytoskeleton. At high concentrations, profilin prevents the polymerization of actin, whereas it enhances it at low concentrations. The polypeptide is Profilin-3 (Olea europaea (Common olive)).